A 108-amino-acid polypeptide reads, in one-letter code: Large ribosomal subunit protein eL33A (108 aa).

Belongs to the eukaryotic ribosomal protein eL33 family. Component of the large ribosomal subunit (LSU). Mature yeast ribosomes consist of a small (40S) and a large (60S) subunit. The 40S small subunit contains 1 molecule of ribosomal RNA (18S rRNA) and at least 33 different proteins. The large 60S subunit contains 3 rRNA molecules (25S, 5.8S and 5S rRNA) and at least 46 different proteins.

The protein resides in the cytoplasm. It is found in the nucleus. It localises to the nucleolus. Functionally, component of the ribosome, a large ribonucleoprotein complex responsible for the synthesis of proteins in the cell. The small ribosomal subunit (SSU) binds messenger RNAs (mRNAs) and translates the encoded message by selecting cognate aminoacyl-transfer RNA (tRNA) molecules. The large subunit (LSU) contains the ribosomal catalytic site termed the peptidyl transferase center (PTC), which catalyzes the formation of peptide bonds, thereby polymerizing the amino acids delivered by tRNAs into a polypeptide chain. The nascent polypeptides leave the ribosome through a tunnel in the LSU and interact with protein factors that function in enzymatic processing, targeting, and the membrane insertion of nascent chains at the exit of the ribosomal tunnel. This is Large ribosomal subunit protein eL33A (rpl35b) from Schizosaccharomyces pombe (strain 972 / ATCC 24843) (Fission yeast).